The chain runs to 201 residues: Histidine biosynthesis bifunctional protein HisIE (201 aa).

The interval 1 to 114 (MLTAQQIEKL…FAPAQTEWGF (114 aa)) is phosphoribosyl-AMP cyclohydrolase. The segment at 115 to 201 (LYQLEKLLAS…SCVIRRLRER (87 aa)) is phosphoribosyl-ATP pyrophosphohydrolase.

In the N-terminal section; belongs to the PRA-CH family. This sequence in the C-terminal section; belongs to the PRA-PH family.

The protein localises to the cytoplasm. It carries out the reaction 1-(5-phospho-beta-D-ribosyl)-ATP + H2O = 1-(5-phospho-beta-D-ribosyl)-5'-AMP + diphosphate + H(+). It catalyses the reaction 1-(5-phospho-beta-D-ribosyl)-5'-AMP + H2O = 1-(5-phospho-beta-D-ribosyl)-5-[(5-phospho-beta-D-ribosylamino)methylideneamino]imidazole-4-carboxamide. It functions in the pathway amino-acid biosynthesis; L-histidine biosynthesis; L-histidine from 5-phospho-alpha-D-ribose 1-diphosphate: step 2/9. It participates in amino-acid biosynthesis; L-histidine biosynthesis; L-histidine from 5-phospho-alpha-D-ribose 1-diphosphate: step 3/9. The chain is Histidine biosynthesis bifunctional protein HisIE from Photorhabdus laumondii subsp. laumondii (strain DSM 15139 / CIP 105565 / TT01) (Photorhabdus luminescens subsp. laumondii).